A 588-amino-acid chain; its full sequence is Autophagy-related protein 22-1 (588 aa).

The chain crosses the membrane as a helical span at residues 35–55; sequence YGWAAEVFTVCAMGSFLPITL. N-linked (GlcNAc...) asparagine glycosylation is present at N84. Helical transmembrane passes span 109-129, 144-164, and 168-188; these read TASF…ILII, LLVS…AVTP, and LLGG…FVLL. N-linked (GlcNAc...) asparagine glycosylation occurs at N255. 8 helical membrane-spanning segments follow: residues 270–290, 301–321, 365–385, 399–419, 434–454, 471–493, 507–527, and 536–556; these read GIGI…LVIV, LVLF…AFWL, ILLF…VSGT, AALG…AFSW, IIAC…GFIP, FPLG…SFFG, LYAI…GFIT, and AFFF…LVDA.

The protein belongs to the ATG22 family.

It localises to the vacuole membrane. Functionally, vacuolar effluxer which mediate the efflux of amino acids resulting from autophagic degradation. The release of autophagic amino acids allows the maintenance of protein synthesis and viability during nitrogen starvation. In Emericella nidulans (strain FGSC A4 / ATCC 38163 / CBS 112.46 / NRRL 194 / M139) (Aspergillus nidulans), this protein is Autophagy-related protein 22-1 (atg22-1).